Here is a 244-residue protein sequence, read N- to C-terminus: Gas vesicle protein F (244 aa).

Positions 1–109 (MTVGLYLYGI…QLKELFAKLS (109 aa)) are N-terminus. The tract at residues 110–233 (GQREVSIKIF…GDRLRIRYNN (124 aa)) is C-terminus, modifed ferredoxin fold. Residues 234–244 (LTAPYTFAQLI) are C-tail.

The protein belongs to the gas vesicle GvpF/GvpL family. Binds GvpA.

The protein resides in the gas vesicle. A minor component of the gas vesicle, may be involved in preventing GvpA aggregation during gas vesicle nucleation. Gas vesicles (GV) are hollow, gas filled proteinaceous nanostructures. During planktonic growth they allow positioning of the organism at a favorable depth for light or nutrient acquisition. This is Gas vesicle protein F from Microcystis aeruginosa (strain PCC 7806).